Reading from the N-terminus, the 798-residue chain is Peroxisome proliferator-activated receptor gamma coactivator 1-alpha (798 aa).

Residue Lys79 is modified to N6-acetyllysine. Positions 100-140 (PVDEDGLPSFDALTDGDVTTDNEASPSSMPDGTPPPQEAEE) are disordered. Over residues 116–129 (DVTTDNEASPSSMP) the composition is skewed to polar residues. The LXXLL motif motif lies at 144 to 148 (LKKLL). Residue Lys146 is modified to N6-acetyllysine. Thr178 bears the Phosphothreonine; by AMPK mark. The residue at position 184 (Lys184) is an N6-acetyllysine. Residues 213–277 (YLTTNDDPPH…NDPKGSPFEN (65 aa)) form a disordered region. Residues 219 to 237 (DPPHTKPTENRNSSRDKCT) show a composition bias toward basic and acidic residues. N6-acetyllysine occurs at positions 254, 271, 278, and 321. The disordered stretch occupies residues 290-351 (GTAGLTPPTT…NNSTKKGPEQ (62 aa)). An interaction with PPARG region spans residues 293–339 (GLTPPTTPPHKANQDNPFRASPKLKSSCKTVVPPPSKKPRYSESSGT). Polar residues predominate over residues 334-346 (SESSGTQGNNSTK). Residues Lys347, Lys413, Lys442, and Lys451 each carry the N6-acetyllysine modification. The tract at residues 350–798 (EQSELYAQLS…LKEAQRSLRR (449 aa)) is mediates interaction with RNF34. Ser539 carries the post-translational modification Phosphoserine; by AMPK. Disordered regions lie at residues 542 to 599 (SFNS…SSRS), 613 to 639 (HRNSPLYVRSRSRSPYSRRPRYDSYEE), and 650 to 669 (YRREYEKRESERAKQRERQR). Positions 563–578 (QRMRSRSRSFSRHRSC) are enriched in basic residues. Over residues 579–599 (SRSPYSRSRSRSPGSRSSSRS) the composition is skewed to low complexity. The segment covering 622–631 (SRSRSPYSRR) has biased composition (basic residues). Residues 677–753 (RVIYVGKIRP…TDFELYFCGR (77 aa)) enclose the RRM domain. N6-acetyllysine occurs at positions 758 and 779.

In terms of assembly, homooligomer. Interacts with MYBBP1A; inhibits MYBBP1A transcriptional activation. Interacts with PRDM16, LPIN1 and PML. Interacts (via LXXLL motif) with RORA and RORC (via AF-2 motif); activates RORA and RORC transcriptional activation. Interacts with LRPPRC. Interacts with FOXO1. Interacts with NR5A2. Phosphorylation by AMPK in skeletal muscle increases activation of its own promoter. Phosphorylated by CLK2. In terms of processing, heavily acetylated by KAT2A/GCN5 under conditions of high nutrients, leading to inactivation of PPARGC1A. Deacetylated by SIRT1 in low nutrients/high NAD conditions, leading to its activation. Post-translationally, ubiquitinated. Ubiquitination by RNF34 induces proteasomal degradation. As to expression, heart, skeletal muscle, liver and kidney. Expressed at lower levels in brain and pancreas and at very low levels in the intestine and white adipose tissue. In skeletal muscle, levels were lower in obese than in lean subjects and fasting induced a 2-fold increase in levels in the skeletal muscle in obese subjects.

The protein localises to the nucleus. It is found in the PML body. The protein resides in the cytoplasm. In terms of biological role, transcriptional coactivator for steroid receptors and nuclear receptors. Greatly increases the transcriptional activity of PPARG and thyroid hormone receptor on the uncoupling protein promoter. Can regulate key mitochondrial genes that contribute to the program of adaptive thermogenesis. Plays an essential role in metabolic reprogramming in response to dietary availability through coordination of the expression of a wide array of genes involved in glucose and fatty acid metabolism. Acts as a key regulator of gluconeogenesis: stimulates hepatic gluconeogenesis by increasing the expression of gluconeogenic enzymes, and acting together with FOXO1 to promote the fasting gluconeogenic program. Induces the expression of PERM1 in the skeletal muscle in an ESRRA-dependent manner. Also involved in the integration of the circadian rhythms and energy metabolism. Required for oscillatory expression of clock genes, such as BMAL1 and NR1D1, through the coactivation of RORA and RORC, and metabolic genes, such as PDK4 and PEPCK. The sequence is that of Peroxisome proliferator-activated receptor gamma coactivator 1-alpha (PPARGC1A) from Homo sapiens (Human).